A 391-amino-acid polypeptide reads, in one-letter code: Chorismate synthase (391 aa).

The NADP(+) site is built by R39 and R45. FMN is bound by residues 133–135, 254–255, G299, 314–318, and R340; these read RAS, QA, and KPIAT.

The protein belongs to the chorismate synthase family. As to quaternary structure, homotetramer. Requires FMNH2 as cofactor.

The catalysed reaction is 5-O-(1-carboxyvinyl)-3-phosphoshikimate = chorismate + phosphate. Its pathway is metabolic intermediate biosynthesis; chorismate biosynthesis; chorismate from D-erythrose 4-phosphate and phosphoenolpyruvate: step 7/7. In terms of biological role, catalyzes the anti-1,4-elimination of the C-3 phosphate and the C-6 proR hydrogen from 5-enolpyruvylshikimate-3-phosphate (EPSP) to yield chorismate, which is the branch point compound that serves as the starting substrate for the three terminal pathways of aromatic amino acid biosynthesis. This reaction introduces a second double bond into the aromatic ring system. The chain is Chorismate synthase from Symbiobacterium thermophilum (strain DSM 24528 / JCM 14929 / IAM 14863 / T).